The primary structure comprises 503 residues: 3-octaprenyl-4-hydroxybenzoate carboxy-lyase (503 aa).

N176 provides a ligand contact to Mn(2+). Residues 179 to 181, 193 to 195, and 198 to 199 each bind prenylated FMN; these read IYR, RWL, and RG. Mn(2+) is bound at residue E242. D303 acts as the Proton donor in catalysis.

This sequence belongs to the UbiD family. Homohexamer. Prenylated FMN is required as a cofactor. Requires Mn(2+) as cofactor.

It is found in the cell membrane. It catalyses the reaction a 4-hydroxy-3-(all-trans-polyprenyl)benzoate + H(+) = a 2-(all-trans-polyprenyl)phenol + CO2. It functions in the pathway cofactor biosynthesis; ubiquinone biosynthesis. Functionally, catalyzes the decarboxylation of 3-octaprenyl-4-hydroxy benzoate to 2-octaprenylphenol, an intermediate step in ubiquinone biosynthesis. The protein is 3-octaprenyl-4-hydroxybenzoate carboxy-lyase of Ralstonia nicotianae (strain ATCC BAA-1114 / GMI1000) (Ralstonia solanacearum).